A 418-amino-acid polypeptide reads, in one-letter code: Gamma-glutamyl phosphate reductase (418 aa).

The protein belongs to the gamma-glutamyl phosphate reductase family.

It is found in the cytoplasm. It carries out the reaction L-glutamate 5-semialdehyde + phosphate + NADP(+) = L-glutamyl 5-phosphate + NADPH + H(+). The protein operates within amino-acid biosynthesis; L-proline biosynthesis; L-glutamate 5-semialdehyde from L-glutamate: step 2/2. Catalyzes the NADPH-dependent reduction of L-glutamate 5-phosphate into L-glutamate 5-semialdehyde and phosphate. The product spontaneously undergoes cyclization to form 1-pyrroline-5-carboxylate. In Clostridium kluyveri (strain NBRC 12016), this protein is Gamma-glutamyl phosphate reductase.